We begin with the raw amino-acid sequence, 714 residues long: Methylmalonyl-CoA mutase (714 aa).

The B12-binding domain occupies 584–714 (RPRILIAKMG…VLNLISQHHD (131 aa)). Histidine 597 lines the adenosylcob(III)alamin pocket.

It belongs to the methylmalonyl-CoA mutase family. Homodimer. Interacts with ArgK. Adenosylcob(III)alamin serves as cofactor.

The enzyme catalyses (R)-methylmalonyl-CoA = succinyl-CoA. Its function is as follows. Catalyzes the interconversion of succinyl-CoA and methylmalonyl-CoA. Could be part of a pathway that converts succinate to propionate. In Escherichia coli (strain K12), this protein is Methylmalonyl-CoA mutase (scpA).